The sequence spans 756 residues: 3-O-alpha-D-glucosyl-L-rhamnose phosphorylase (756 aa).

358–359 (WD) is a substrate binding site. Glu-486 (proton donor) is an active-site residue. Residue 590–591 (KQ) coordinates substrate.

The protein belongs to the glycosyl hydrolase 65 family. Monomer.

Its subcellular location is the cytoplasm. The catalysed reaction is 3-O-alpha-D-glucosyl-L-rhamnose + phosphate = beta-D-glucose 1-phosphate + L-rhamnopyranose. Its function is as follows. Phosphorylase showing strict alpha-1,3-regioselectivity and producing 3-O-alpha-D-glucopyranosyl-L-rhamnopyranose. Specific for L-rhamnose as acceptor and beta-D-glucose 1-phosphate as donor. Does not phosphorylate alpha,alpha-trehalose, kojibiose, nigerose, or maltose. This chain is 3-O-alpha-D-glucosyl-L-rhamnose phosphorylase, found in Lachnoclostridium phytofermentans (strain ATCC 700394 / DSM 18823 / ISDg) (Clostridium phytofermentans).